A 1178-amino-acid polypeptide reads, in one-letter code: Topoisomerase 1-associated factor 1 (1178 aa).

Disordered regions lie at residues 576-596, 792-811, 896-965, and 980-1178; these read KQDD…DEEL, SWES…PMIP, DARG…VLEE, and KIKS…SDSE. A compositionally biased stretch (acidic residues) spans 580–596; that stretch reads QAIDVEDEEHASEDEEL. Over residues 896 to 905 the composition is skewed to basic and acidic residues; it reads DARGGGRDEQ. The span at 911 to 921 shows a compositional bias: acidic residues; that stretch reads FGSDSEGEDNV. Basic and acidic residues-rich tracts occupy residues 981–991, 1001–1015, and 1025–1034; these read IKSDLYIHASD, EFFR…EQAA, and VVEEISDKSS. Residues 1079-1092 show a composition bias toward polar residues; it reads EAQSPDSPGLGSSS. Residues 1105-1116 show a composition bias toward acidic residues; it reads SDEDELEFDDDL. The span at 1117 to 1128 shows a compositional bias: basic and acidic residues; sequence AFSRDRNRRKDF. Residues 1138–1147 show a composition bias toward low complexity; that stretch reads EPAQQDADPA. Over residues 1148–1157 the composition is skewed to acidic residues; sequence APDEDDDEDA.

It belongs to the timeless family. Component of the fork protection complex (FPC) consisting of tof1 and csm3.

It localises to the nucleus. Functionally, forms a fork protection complex (FPC) with csm3 and which is required for chromosome segregation during meiosis and DNA damage repair. FPC coordinates leading and lagging strand synthesis and moves with the replication fork. FPC stabilizes replication forks in a configuration that is recognized by replication checkpoint sensors. The sequence is that of Topoisomerase 1-associated factor 1 (tof1) from Aspergillus clavatus (strain ATCC 1007 / CBS 513.65 / DSM 816 / NCTC 3887 / NRRL 1 / QM 1276 / 107).